We begin with the raw amino-acid sequence, 207 residues long: ATP-dependent Clp protease proteolytic subunit 1 (207 aa).

The active-site Nucleophile is the serine 103. Residue histidine 128 is part of the active site.

Belongs to the peptidase S14 family. In terms of assembly, fourteen ClpP subunits assemble into 2 heptameric rings which stack back to back to give a disk-like structure with a central cavity, resembling the structure of eukaryotic proteasomes.

Its subcellular location is the cytoplasm. It carries out the reaction Hydrolysis of proteins to small peptides in the presence of ATP and magnesium. alpha-casein is the usual test substrate. In the absence of ATP, only oligopeptides shorter than five residues are hydrolyzed (such as succinyl-Leu-Tyr-|-NHMec, and Leu-Tyr-Leu-|-Tyr-Trp, in which cleavage of the -Tyr-|-Leu- and -Tyr-|-Trp bonds also occurs).. Functionally, cleaves peptides in various proteins in a process that requires ATP hydrolysis. Has a chymotrypsin-like activity. Plays a major role in the degradation of misfolded proteins. This chain is ATP-dependent Clp protease proteolytic subunit 1, found in Tropheryma whipplei (strain Twist) (Whipple's bacillus).